The following is a 303-amino-acid chain: Diaminopimelate epimerase (303 aa).

3 residues coordinate substrate: Asn15, Gln47, and Asn67. The active-site Proton donor is the Cys76. Substrate contacts are provided by residues 77–78, Asn163, Asn197, and 215–216; these read GN and ER. The active-site Proton acceptor is the Cys224. 225–226 contributes to the substrate binding site; the sequence is GS. Residues 278-303 form a disordered region; sequence FDPATGEWSRDTQGLQGSGNADRGAA.

Belongs to the diaminopimelate epimerase family. In terms of assembly, homodimer.

Its subcellular location is the cytoplasm. It carries out the reaction (2S,6S)-2,6-diaminopimelate = meso-2,6-diaminopimelate. It participates in amino-acid biosynthesis; L-lysine biosynthesis via DAP pathway; DL-2,6-diaminopimelate from LL-2,6-diaminopimelate: step 1/1. Its function is as follows. Catalyzes the stereoinversion of LL-2,6-diaminopimelate (L,L-DAP) to meso-diaminopimelate (meso-DAP), a precursor of L-lysine and an essential component of the bacterial peptidoglycan. This is Diaminopimelate epimerase from Brucella melitensis biotype 1 (strain ATCC 23456 / CCUG 17765 / NCTC 10094 / 16M).